A 195-amino-acid polypeptide reads, in one-letter code: Guanylate kinase (195 aa).

One can recognise a Guanylate kinase-like domain in the interval 5–183 (GILFVISGPS…ALQKITAIII (179 aa)). 12–19 (GPSGVGKG) contributes to the ATP binding site.

The protein belongs to the guanylate kinase family.

It localises to the cytoplasm. The catalysed reaction is GMP + ATP = GDP + ADP. Its function is as follows. Essential for recycling GMP and indirectly, cGMP. The polypeptide is Guanylate kinase (Syntrophomonas wolfei subsp. wolfei (strain DSM 2245B / Goettingen)).